Reading from the N-terminus, the 1238-residue chain is Protein translocase subunit SecA 1 (1238 aa).

Residues Q107, 125 to 129 (GEGKT), and D570 contribute to the ATP site. The interval 1194–1220 (AAGSEGRAEGSVDTVRVEEPRIGRNAP) is disordered. The span at 1199–1215 (GRAEGSVDTVRVEEPRI) shows a compositional bias: basic and acidic residues. Zn(2+)-binding residues include C1221, C1223, C1232, and C1233.

This sequence belongs to the SecA family. As to quaternary structure, monomer and homodimer. Part of the essential Sec protein translocation apparatus which comprises SecA, SecYEG and auxiliary proteins SecDF. Other proteins may also be involved. Zn(2+) serves as cofactor.

It is found in the cell inner membrane. It localises to the cytoplasm. The catalysed reaction is ATP + H2O + cellular proteinSide 1 = ADP + phosphate + cellular proteinSide 2.. Functionally, part of the Sec protein translocase complex. Interacts with the SecYEG preprotein conducting channel. Has a central role in coupling the hydrolysis of ATP to the transfer of proteins into and across the cell membrane, serving as an ATP-driven molecular motor driving the stepwise translocation of polypeptide chains across the membrane. In Rhodopirellula baltica (strain DSM 10527 / NCIMB 13988 / SH1), this protein is Protein translocase subunit SecA 1.